We begin with the raw amino-acid sequence, 207 residues long: FMN-dependent NADH:quinone oxidoreductase (207 aa).

FMN contacts are provided by residues S10, 16-18 (SIS), 96-99 (MYNL), and 141-144 (SRGG).

It belongs to the azoreductase type 1 family. Homodimer. Requires FMN as cofactor.

It carries out the reaction 2 a quinone + NADH + H(+) = 2 a 1,4-benzosemiquinone + NAD(+). The enzyme catalyses N,N-dimethyl-1,4-phenylenediamine + anthranilate + 2 NAD(+) = 2-(4-dimethylaminophenyl)diazenylbenzoate + 2 NADH + 2 H(+). Its function is as follows. Quinone reductase that provides resistance to thiol-specific stress caused by electrophilic quinones. Also exhibits azoreductase activity. Catalyzes the reductive cleavage of the azo bond in aromatic azo compounds to the corresponding amines. The protein is FMN-dependent NADH:quinone oxidoreductase of Nostoc sp. (strain PCC 7120 / SAG 25.82 / UTEX 2576).